The sequence spans 97 residues: Co-chaperonin GroES (97 aa).

It belongs to the GroES chaperonin family. As to quaternary structure, heptamer of 7 subunits arranged in a ring. Interacts with the chaperonin GroEL.

It is found in the cytoplasm. In terms of biological role, together with the chaperonin GroEL, plays an essential role in assisting protein folding. The GroEL-GroES system forms a nano-cage that allows encapsulation of the non-native substrate proteins and provides a physical environment optimized to promote and accelerate protein folding. GroES binds to the apical surface of the GroEL ring, thereby capping the opening of the GroEL channel. In Buchnera aphidicola subsp. Tetraneura caerulescens, this protein is Co-chaperonin GroES.